Here is a 469-residue protein sequence, read N- to C-terminus: 3-isopropylmalate dehydratase large subunit (469 aa).

[4Fe-4S] cluster contacts are provided by C350, C410, and C413.

The protein belongs to the aconitase/IPM isomerase family. LeuC type 1 subfamily. As to quaternary structure, heterodimer of LeuC and LeuD. [4Fe-4S] cluster serves as cofactor.

It catalyses the reaction (2R,3S)-3-isopropylmalate = (2S)-2-isopropylmalate. The protein operates within amino-acid biosynthesis; L-leucine biosynthesis; L-leucine from 3-methyl-2-oxobutanoate: step 2/4. Functionally, catalyzes the isomerization between 2-isopropylmalate and 3-isopropylmalate, via the formation of 2-isopropylmaleate. In Sinorhizobium medicae (strain WSM419) (Ensifer medicae), this protein is 3-isopropylmalate dehydratase large subunit.